A 591-amino-acid polypeptide reads, in one-letter code: V-type ATP synthase alpha chain (591 aa).

Position 233-240 (233-240 (GPFGAGKT)) interacts with ATP.

It belongs to the ATPase alpha/beta chains family.

The enzyme catalyses ATP + H2O + 4 H(+)(in) = ADP + phosphate + 5 H(+)(out). Produces ATP from ADP in the presence of a proton gradient across the membrane. The V-type alpha chain is a catalytic subunit. In Streptococcus pneumoniae (strain ATCC 700669 / Spain 23F-1), this protein is V-type ATP synthase alpha chain.